A 331-amino-acid chain; its full sequence is Zinc finger CW-type PWWP domain protein 2 homolog (331 aa).

The CW-type zinc-finger motif lies at 9-64 (EFVHRTWVQCENESCLKWRLLSPAAAAAVNPSEPWYCFMNTDPSYSSCSVSEEDFP). Residues cysteine 18, cysteine 23, cysteine 45, and cysteine 56 each contribute to the Zn(2+) site. The 65-residue stretch at 83-147 (LGSLVLVKLR…AAFVGHFSLT (65 aa)) folds into the PWWP domain. Positions 264-295 (IQEPTAREDESQGEQLSQCSPESPTGSPFQSY) are disordered. A compositionally biased stretch (polar residues) spans 276–293 (GEQLSQCSPESPTGSPFQ).

Histone methylation reader which binds to non-methylated (H3K4me0), monomethylated (H3K4me1), dimethylated (H3K4me2) and trimethylated (H3K4me3) 'Lys-4' on histone H3. The order of binding preference is H3K4me3 &gt; H3K4me2 &gt; H3K4me1 &gt; H3K4me0. This is Zinc finger CW-type PWWP domain protein 2 homolog (Zcwpw2) from Mus musculus (Mouse).